The sequence spans 455 residues: Phosphoglucosamine mutase (455 aa).

Serine 106 functions as the Phosphoserine intermediate in the catalytic mechanism. Mg(2+)-binding residues include serine 106, aspartate 245, aspartate 247, and aspartate 249. Serine 106 carries the phosphoserine modification.

Belongs to the phosphohexose mutase family. Mg(2+) serves as cofactor. Activated by phosphorylation.

It carries out the reaction alpha-D-glucosamine 1-phosphate = D-glucosamine 6-phosphate. Catalyzes the conversion of glucosamine-6-phosphate to glucosamine-1-phosphate. The protein is Phosphoglucosamine mutase of Acaryochloris marina (strain MBIC 11017).